Here is a 2073-residue protein sequence, read N- to C-terminus: Histone acetyltransferase KAT6B (2073 aa).

Positions 1–77 (MVKLANPLYT…LASYKDPDNP (77 aa)) constitute an SAMD1-like winged helix (WH) domain. The tract at residues 72-97 (KDPDNPGRFSSVKPGTFPKSAKGSRG) is disordered. The H15 domain occupies 103 to 176 (RNVDWNKLLR…KDGPQYRVNY (74 aa)). 2 PHD-type zinc fingers span residues 213–272 (IPIC…CKTC) and 269–320 (CKTC…CRPK). Serine 355 is modified (phosphoserine). Disordered stretches follow at residues 360-409 (EGSM…RPGA), 442-531 (FTPS…VPSL), 553-583 (TQGQ…TAKS), and 639-663 (VTPQ…PDQD). The negatively regulates HAT activity stretch occupies residues 361 to 717 (GSMNAFTGRG…ECESGVEDCG (357 aa)). The span at 379–399 (KVCTTPSSGHAASGKDSSSRL) shows a compositional bias: polar residues. Positions 447-460 (DGRRSRGEIIDFSK) are enriched in basic and acidic residues. Residues 470-485 (QKQSCTSHVLATGTTQ) are compositionally biased toward polar residues. Residues 488–499 (KPPPSSLPPPTP) are compositionally biased toward pro residues. Residues 501-531 (SGQSPSSQKSSTATSSPSPQSSSSQCSVPSL) show a composition bias toward low complexity. Serine 647 is modified (phosphoserine). Residue lysine 673 forms a Glycyl lysine isopeptide (Lys-Gly) (interchain with G-Cter in SUMO2) linkage. Residues 715–989 (DCGRYPSVIE…LDPDSLRWTP (275 aa)) enclose the MYST-type HAT domain. Residues 718-1008 (RYPSVIEFGK…EEEREAEKEA (291 aa)) form a catalytic region. Residues 748–773 (LYLCEFCLKYMKSKNILLRHSKKCGW) form a C2HC MYST-type zinc finger. An interaction with BRPF1 region spans residues 752-1008 (EFCLKYMKSK…EEEREAEKEA (257 aa)). Position 815 is an N6-acetyllysine; by autocatalysis (lysine 815). Acetyl-CoA is bound by residues 856–860 (SCIMI) and 865–871 (QRQGFGR). The active-site Proton donor/acceptor is glutamate 891. Serine 895 provides a ligand contact to acetyl-CoA. Disordered regions lie at residues 1022-1452 (EQEI…FKEV), 1484-1538 (SCNS…MEID), and 1580-1619 (QSPQ…SPSV). Residues 1025-1043 (ILSTRANSRQSPAKVQSKN) show a composition bias toward polar residues. N6-acetyllysine is present on residues lysine 1038, lysine 1042, and lysine 1044. Serine 1048 is subject to Phosphoserine. The segment covering 1069–1105 (SEEEEEEEDEEEEEEEEEEEEDEEEEEEEEEEEEEEN) has biased composition (acidic residues). Residues 1106–1117 (IQSSPPRLTKPQ) are compositionally biased toward polar residues. Residues 1121–1140 (IKRKRPFVLKKKRGRKRRRI) are compositionally biased toward basic residues. Residues 1142-1155 (SSVTTETISETTEV) are compositionally biased toward low complexity. Residues 1187 to 1200 (PVLRKAFQHQPGKK) show a composition bias toward basic residues. Composition is skewed to basic and acidic residues over residues 1229 to 1243 (SNLK…EPLK), 1306 to 1315 (RIEEEVKETG), and 1341 to 1350 (EKPEDDLIKP). Acidic residues predominate over residues 1351–1374 (EEEEEEEEEEEEEEEEEEGEEEEG). Basic and acidic residues-rich tracts occupy residues 1378 to 1390 (VEKD…SQEK) and 1396 to 1407 (STEKEDSARLDD). The segment covering 1408 to 1417 (HEEEEEEDEE) has biased composition (acidic residues). Residues 1433–1452 (HMESAEVEKEELPRESFKEV) are compositionally biased toward basic and acidic residues. Residues 1498-1507 (AVPESDEEPP) show a composition bias toward acidic residues. Positions 1513–1529 (QKQDQKNSKEVDTEFKE) are enriched in basic and acidic residues. The segment at 1560–2073 (QDCAETQEAC…QSLNGSYMRR (514 aa)) is interaction with RUNX1 and RUNX2. Residues 1580 to 1591 (QSPQIATTLDDC) show a composition bias toward polar residues. A compositionally biased stretch (low complexity) spans 1594-1611 (SDHSSPVSSVHSHPGQSV).

Belongs to the MYST (SAS/MOZ) family. In terms of assembly, component of the MOZ/MORF complex composed at least of ING5, KAT6A, KAT6B, MEAF6 and one of BRPF1, BRD1/BRPF2 and BRPF3. Interacts with RUNX1 and RUNX2. In terms of processing, autoacetylated. Autoacetylation at Lys-815 is required for proper function. Ubiquitously expressed, with high levels in heart, pancreas, testis and ovary.

It is found in the nucleus. The catalysed reaction is L-lysyl-[protein] + acetyl-CoA = N(6)-acetyl-L-lysyl-[protein] + CoA + H(+). Functionally, histone acetyltransferase which may be involved in both positive and negative regulation of transcription. Required for RUNX2-dependent transcriptional activation. May be involved in cerebral cortex development. Component of the MOZ/MORF complex which has a histone H3 acetyltransferase activity. This Homo sapiens (Human) protein is Histone acetyltransferase KAT6B (KAT6B).